Here is a 188-residue protein sequence, read N- to C-terminus: Xanthine phosphoribosyltransferase (188 aa).

Residues Leu20 and Asn27 each contribute to the xanthine site. 127–131 (AYGNA) contributes to the 5-phospho-alpha-D-ribose 1-diphosphate binding site. Lys155 provides a ligand contact to xanthine.

Belongs to the purine/pyrimidine phosphoribosyltransferase family. Xpt subfamily. In terms of assembly, homodimer.

It localises to the cytoplasm. The catalysed reaction is XMP + diphosphate = xanthine + 5-phospho-alpha-D-ribose 1-diphosphate. It functions in the pathway purine metabolism; XMP biosynthesis via salvage pathway; XMP from xanthine: step 1/1. In terms of biological role, converts the preformed base xanthine, a product of nucleic acid breakdown, to xanthosine 5'-monophosphate (XMP), so it can be reused for RNA or DNA synthesis. In Parabacteroides distasonis (strain ATCC 8503 / DSM 20701 / CIP 104284 / JCM 5825 / NCTC 11152), this protein is Xanthine phosphoribosyltransferase.